The primary structure comprises 366 residues: uncharacterized protein (366 aa).

An OBG-type G domain is found at 64-289 (GTVGFIGFPS…LKETMWDYLN (226 aa)). GTP is bound by residues 70 to 77 (GFPSVGKS), 116 to 120 (DLPGI), and 247 to 250 (NKID). Residues 289–365 (NLVRVYTRPR…LDEDVVTIVK (77 aa)) form the TGS domain.

It belongs to the TRAFAC class OBG-HflX-like GTPase superfamily. OBG GTPase family.

This is an uncharacterized protein from Schizosaccharomyces pombe (strain 972 / ATCC 24843) (Fission yeast).